Consider the following 426-residue polypeptide: MKLQKPKGTQDILPGESAKWQYVENVIRNLFKQYHYDEIRTPMFEHYEVISRSVGDTTDIVTKEMYDFHDKGDRHITLRPEGTAPVVRSYVENKLFAPEVQKPTKMYYIGSMFRYERPQAGRLREFHQVGVECFGSNNPATDVETIAMGHHLFEDLGIKNVKLHLNSLGSPESRQAYRQALIDYLTPIREQLSKDSQRRLNENPLRVLDSKEPEDKLAVENAPSILDYLDESSQAHFDAVCHMLDALNIPYIIDTNMVRGLDYYNHTIFEFITEIEDNELTICAGGRYDGLVSYFGGPETPAFGFGLGLERLLLILGKQGIPLPIENTIDLYIAVLGSEANLAALDLAQSIRHQGFKVERDYLGRKIKAQFKSADTFNAKVIMTLGSSEVDSREVSLKNNQTRQEVKVSFENIKTGFSSVLKQLGL.

The protein belongs to the class-II aminoacyl-tRNA synthetase family. In terms of assembly, homodimer.

The protein localises to the cytoplasm. It carries out the reaction tRNA(His) + L-histidine + ATP = L-histidyl-tRNA(His) + AMP + diphosphate + H(+). The sequence is that of Histidine--tRNA ligase from Streptococcus agalactiae serotype Ia (strain ATCC 27591 / A909 / CDC SS700).